The primary structure comprises 356 residues: Phenylalanine dehydrogenase (356 aa).

Arg-43 serves as a coordination point for NAD(+). Lys-67 contributes to the L-phenylalanine binding site. Lys-79 functions as the Proton donor/acceptor in the catalytic mechanism. Residue 118-119 (PD) participates in L-phenylalanine binding. Residues Asp-119, Ser-150, Thr-154, 183–189 (GLGAVGG), 206–207 (DT), Arg-211, 240–241 (AM), and 261–263 (AAN) contribute to the NAD(+) site. L-phenylalanine is bound at residue Asn-263.

It belongs to the Glu/Leu/Phe/Val dehydrogenases family. In terms of assembly, homotetramer, dimer of dimers.

It catalyses the reaction L-phenylalanine + NAD(+) + H2O = 3-phenylpyruvate + NH4(+) + NADH + H(+). It functions in the pathway amino-acid biosynthesis; L-phenylalanine biosynthesis; L-phenylalanine from phenylpyruvate (PDH route): step 1/1. Its activity is regulated as follows. Subject to competitive inhibition by 3-phenylpropionate for the conversion of L-phenylalanine to phenylpyruvate. Subject to competitive inhibition by D-phenylalanine for the conversion of phenylpyruvate to L-phenylalanine. Catalyzes the reversible NAD(+)-dependent oxidative deamination of L-phenylalanine to phenylpyruvate. This is Phenylalanine dehydrogenase from Rhodococcus sp.